We begin with the raw amino-acid sequence, 376 residues long: Heme-dependent oxidative N-demethylase gamma subunit (376 aa).

In terms of assembly, the heme-dependent oxidative N-demethylase (HODM) is a heterotetramer composed of a catalytic alpha subunit, a FMN/2Fe-2S-dependent oxidoreductase beta subunit, a gamma subunit with putative aminotransferase activity, and a delta subunit of unknown function.

Functionally, component of the heme-dependent oxidative N-demethylase (HODM) enzyme, that catalyzes the NADPH-dependent oxidation of dimethylamine (DMA) to methylamine (MA) and formaldehyde. Functions in bacterial methylated amine catabolism, linking alkylamine oxidation to the tetrahydrofolate C1 pool. The gamma subunit of HODM may act as an aminomethyltransferase involved in the detoxification of formaldehyde released by the alpha subunit; this process requires tetrahydrofolate (THF). The sequence is that of Heme-dependent oxidative N-demethylase gamma subunit from Ectopseudomonas mendocina (strain ymp) (Pseudomonas mendocina).